Here is a 385-residue protein sequence, read N- to C-terminus: Phospho-N-acetylmuramoyl-pentapeptide-transferase (385 aa).

Transmembrane regions (helical) follow at residues 23-43 (FITV…LGAG), 79-99 (MGGI…GAVA), 103-123 (VWLS…DDYV), 135-155 (AWYK…VLYF), 186-206 (LGVD…VTAV), 218-238 (GLTT…VYVS), 258-278 (LTVF…YNGY), 282-302 (VFMG…TILM), 307-327 (LLLP…IVQT), and 362-382 (KIVT…LLIL).

The protein belongs to the glycosyltransferase 4 family. MraY subfamily. Mg(2+) serves as cofactor.

It is found in the cell inner membrane. The enzyme catalyses UDP-N-acetyl-alpha-D-muramoyl-L-alanyl-gamma-D-glutamyl-meso-2,6-diaminopimeloyl-D-alanyl-D-alanine + di-trans,octa-cis-undecaprenyl phosphate = di-trans,octa-cis-undecaprenyl diphospho-N-acetyl-alpha-D-muramoyl-L-alanyl-D-glutamyl-meso-2,6-diaminopimeloyl-D-alanyl-D-alanine + UMP. It participates in cell wall biogenesis; peptidoglycan biosynthesis. Its function is as follows. Catalyzes the initial step of the lipid cycle reactions in the biosynthesis of the cell wall peptidoglycan: transfers peptidoglycan precursor phospho-MurNAc-pentapeptide from UDP-MurNAc-pentapeptide onto the lipid carrier undecaprenyl phosphate, yielding undecaprenyl-pyrophosphoryl-MurNAc-pentapeptide, known as lipid I. The polypeptide is Phospho-N-acetylmuramoyl-pentapeptide-transferase (Salinibacter ruber (strain DSM 13855 / M31)).